Here is a 38-residue protein sequence, read N- to C-terminus: Beta-defensin 8 (38 aa).

3 cysteine pairs are disulfide-bonded: C7/C36, C14/C29, and C19/C37.

It belongs to the beta-defensin family. Neutrophilic granules.

The protein localises to the secreted. Has bactericidal activity. Active against E.coli ML35 and S.aureus 502A. The sequence is that of Beta-defensin 8 (DEFB8) from Bos taurus (Bovine).